Reading from the N-terminus, the 286-residue chain is Ribosome maturation factor RimP (286 aa).

Acidic residues predominate over residues 200 to 224; sequence LDGEDGDDTGVDAGDPDQDDADDAL. Residues 200 to 286 form a disordered region; that stretch reads LDGEDGDDTG…ANASTVKETH (87 aa). A compositionally biased stretch (basic residues) spans 248 to 267; sequence VGRKAKGKKASPKKSNAKKK. The span at 273–286 shows a compositional bias: polar residues; it reads AASSANASTVKETH.

It belongs to the RimP family.

The protein resides in the cytoplasm. Functionally, required for maturation of 30S ribosomal subunits. This Xanthobacter autotrophicus (strain ATCC BAA-1158 / Py2) protein is Ribosome maturation factor RimP.